Reading from the N-terminus, the 240-residue chain is Orotidine 5'-phosphate decarboxylase (240 aa).

Residues aspartate 12, lysine 34, 62-71 (DMKLFDIGNT), threonine 117, arginine 180, glutamine 189, glycine 209, and arginine 210 each bind substrate. The active-site Proton donor is the lysine 64.

It belongs to the OMP decarboxylase family. Type 1 subfamily. Homodimer.

It carries out the reaction orotidine 5'-phosphate + H(+) = UMP + CO2. Its pathway is pyrimidine metabolism; UMP biosynthesis via de novo pathway; UMP from orotate: step 2/2. In terms of biological role, catalyzes the decarboxylation of orotidine 5'-monophosphate (OMP) to uridine 5'-monophosphate (UMP). This is Orotidine 5'-phosphate decarboxylase from Ruegeria pomeroyi (strain ATCC 700808 / DSM 15171 / DSS-3) (Silicibacter pomeroyi).